Consider the following 323-residue polypeptide: ATP synthase gamma chain (323 aa).

Residues 206–240 form an insert region; sequence NPIVNLVGFGYKERGVKPINNRRATSDIVGESKSI.

It belongs to the ATPase gamma chain family. As to quaternary structure, F-type ATPases have 2 components, CF(1) - the catalytic core - and CF(0) - the membrane proton channel. CF(1) has five subunits: alpha(3), beta(3), gamma(1), delta(1), epsilon(1). CF(0) has three main subunits: a, b and c.

The protein resides in the cell inner membrane. Produces ATP from ADP in the presence of a proton gradient across the membrane. The gamma chain is believed to be important in regulating ATPase activity and the flow of protons through the CF(0) complex. This Rickettsia conorii (strain ATCC VR-613 / Malish 7) protein is ATP synthase gamma chain.